Consider the following 618-residue polypeptide: MSHVRGLGLPGCLALAALVSLVHSQHVFLAPQQALSLLQRVRRANSGFLEELRKGNLERECVEEQCSYEEAFEALESPQDTDVFWAKYTVCDSVRKPRETFMDCLEGRCAMDLGVNYLGTVNVTHTGIQCQLWRSRYPHKPEINSTTHPGADLKENFCRNPDSSTTGPWCYTTDPTVRREECSVPVCGQEGRTTVVMTPRSGGSKDNLSPPLGQCLTERGRLYQGNLAVTTLGSPCLPWNSLPAKTLSKYQDFDPEVKLVENFCRNPDWDEEGAWCYVAGQPGDFEYCNLNYCEEAVGEENYDVDESIAGRTTDAEFHTFFNEKTFGLGEADCGLRPLFEKKSLKDTTEKELLDSYIDGRIVEGWDAEKGIAPWQVMLFRKSPQELLCGASLISDRWVLTAAHCILYPPWDKNFTENDLLVRIGKHSRTRYERNVEKISMLEKIYVHPRYNWRENLDRDIALLKLKKPVPFSDYIHPVCLPDKQTVTSLLRAGYKGRVTGWGNLRETWTTNINEIQPSVLQVVNLPIVERPVCKASTRIRITDNMFCAGFKVNDTKRGDACEGDSGGPFVMKSPFNNRWYQMGIVSWGEGCDRKGKYGFYTHVFRLKRWIQKVIDQFG.

An N-terminal signal peptide occupies residues 1–24; sequence MSHVRGLGLPGCLALAALVSLVHS. A propeptide spanning residues 25–43 is cleaved from the precursor; that stretch reads QHVFLAPQQALSLLQRVRR. The Gla domain occupies 44-90; sequence ANSGFLEELRKGNLERECVEEQCSYEEAFEALESPQDTDVFWAKYTV. 10 positions are modified to 4-carboxyglutamate: Glu-50, Glu-51, Glu-58, Glu-60, Glu-63, Glu-64, Glu-69, Glu-70, Glu-73, and Glu-76. Residues Cys-61 and Cys-66 are joined by a disulfide bond. 10 cysteine pairs are disulfide-bonded: Cys-91-Cys-104, Cys-109-Cys-187, Cys-130-Cys-170, Cys-158-Cys-182, Cys-215-Cys-293, Cys-236-Cys-276, Cys-264-Cys-288, Cys-333-Cys-479, Cys-388-Cys-404, and Cys-533-Cys-547. Kringle domains lie at 109 to 187 and 215 to 292; these read CAMD…VPVC and CLTE…NLNY. N-linked (GlcNAc...) asparagine glycosylation is found at Asn-122 and Asn-144. Residues 361-615 form the Peptidase S1 domain; it reads IVEGWDAEKG…LKRWIQKVID (255 aa). The Charge relay system role is filled by His-403. Asn-413 is a glycosylation site (N-linked (GlcNAc...) asparagine). Asp-459 acts as the Charge relay system in catalysis. The tract at residues 548–570 is high affinity receptor-binding region which is also known as the TP508 peptide; the sequence is AGFKVNDTKRGDACEGDSGGPFV. The N-linked (GlcNAc...) asparagine glycan is linked to Asn-553. Cys-561 and Cys-591 are joined by a disulfide. Ser-565 acts as the Charge relay system in catalysis.

Belongs to the peptidase S1 family. In terms of assembly, heterodimer (named alpha-thrombin) of a light and a heavy chain; disulfide-linked. Forms a heterodimer with SERPINA5. In plasma, interacts (via N-terminus) with alpha-1-microglobulin; this interaction does not prevent the activation of prothrombin to thrombin. Post-translationally, the gamma-carboxyglutamyl residues, which bind calcium ions, result from the carboxylation of glutamyl residues by a microsomal enzyme, the vitamin K-dependent carboxylase. The modified residues are necessary for the calcium-dependent interaction with a negatively charged phospholipid surface, which is essential for the conversion of prothrombin to thrombin. In the penultimate step of the coagulation cascade, prothrombin is converted to thrombin by the prothrombinase complex composed of factor Xa (F10), cofactor Va (F5), and phospholipids. This activation requires factor Xa-catalyzed sequential cleavage at 2 sites, Arg-311 and Arg-360, along 2 possible pathways. In the first pathway, the first cleavage occurs at Arg-311, leading to the formation of the inactive intermediate prethrombin-2. This pathway preferentially occurs on platelets and in the absence of cofactor Va. In the second pathway, the first cleavage occurs at Arg-360, which separates protease domain into 2 chains that remain connected through a disulfide bond and generates the active intermediate meizothrombin. The presence of cofactor Va directs activation along the meizothrombin pathway and greatly accelerates the rate of cleavage at Arg-360, but has a smaller effect on the cleavage of meizothrombin at Arg-311. Meizothrombin accumulates as an intermediate when prothrombinase is assembled on the membrane of red blood cells.

It catalyses the reaction Selective cleavage of Arg-|-Gly bonds in fibrinogen to form fibrin and release fibrinopeptides A and B.. Its activity is regulated as follows. Activity is promoted in the presence of negatively charged surfaces, such as polyphosphate and dextran sulfate. Inhibited by SERPINA5. Thrombin, which cleaves bonds after Arg and Lys, converts fibrinogen to fibrin and activates factors V, VII, VIII, XIII, and, in complex with thrombomodulin, protein C. Functions in blood homeostasis, inflammation and wound healing. Activates coagulation factor XI (F11); activation is promoted by the contact with negatively charged surfaces. Triggers the production of pro-inflammatory cytokines, such as MCP-1/CCL2 and IL8/CXCL8, in endothelial cells. This chain is Prothrombin (F2), found in Mus musculus (Mouse).